Here is a 1380-residue protein sequence, read N- to C-terminus: Carboxypeptidase D (1380 aa).

Positions 1–31 (MASGRDERPPWRLGRLLLLMCLLLLGSSARA) are cleaved as a signal peptide. At 32–1299 (AHIKKAEATT…DNRIFGLPRE (1268 aa)) the chain is on the extracellular side. The Peptidase M14 1 domain occupies 57 to 380 (RYYHEEELES…ESLITLIEKV (324 aa)). Residues His139 and Glu142 each coordinate Zn(2+). Positions 162–164 (RGD) match the Cell attachment site motif. Asn172 carries an N-linked (GlcNAc...) asparagine glycan. The interval 190–232 (AREGDCGFGDGGPSGASGRDNSRGRDLNRSFPDQFSTGEPPAL) is disordered. Residues 195–204 (CGFGDGGPSG) are compositionally biased toward gly residues. The N-linked (GlcNAc...) asparagine glycan is linked to Asn217. Residue His257 coordinates Zn(2+). Position 265 is a phosphotyrosine (Tyr265). The residue at position 270 (Ser270) is a Phosphoserine. Glu350 functions as the Proton donor/acceptor in the catalytic mechanism. 4 N-linked (GlcNAc...) asparagine glycosylation sites follow: Asn399, Asn410, Asn429, and Asn522. In terms of domain architecture, Peptidase M14 2 spans 502–792 (HHHHFPDMEI…RSLIQFMKQV (291 aa)). Residues His564 and Glu567 each coordinate Zn(2+). Residue Asn626 is glycosylated (N-linked (GlcNAc...) asparagine). His671 contacts Zn(2+). Glu762 (proton donor/acceptor) is an active-site residue. Residues Asn811, Asn855, Asn867, and Asn879 are each glycosylated (N-linked (GlcNAc...) asparagine). The segment at 874-899 (STDSNNESKKGKGASSSTNDASDPTT) is disordered. Residues 887 to 897 (ASSSTNDASDP) show a composition bias toward polar residues. A Peptidase M14 3 domain is found at 932–1211 (RYHSYKDLSE…RSLLSMLVEV (280 aa)). N-linked (GlcNAc...) asparagine glycans are attached at residues Asn955, Asn978, Asn1070, and Asn1142. Residues 1300–1320 (LVVTVSGATMSALILTACIIW) form a helical membrane-spanning segment. Residues Cys1317, Cys1321, and Cys1323 are each lipidated (S-palmitoyl cysteine). The Cytoplasmic segment spans residues 1321-1380 (CICSIKSNRHKDGFHRLRQHHDEYEDEIRMMSTGSKKSLLSHEFQDETDTEEETLYSSKH). Residues Ser1358 and Ser1361 each carry the phosphoserine modification. Positions 1359–1380 (LLSHEFQDETDTEEETLYSSKH) are disordered. 2 positions are modified to phosphothreonine: Thr1368 and Thr1370.

It belongs to the peptidase M14 family. Zn(2+) serves as cofactor. In terms of tissue distribution, highly expressed in placenta, pancreas and hepatoma cells. Lower levels found in skeletal muscle, heart and colon carcinoma and melanoma cell lines.

The protein resides in the cell membrane. It catalyses the reaction Releases C-terminal Arg and Lys from polypeptides.. The protein is Carboxypeptidase D (CPD) of Homo sapiens (Human).